The chain runs to 298 residues: NFU1 iron-sulfur cluster scaffold homolog, mitochondrial (298 aa).

Positions 190-258 (IKELLDTRIR…IPEVESVEQV (69 aa)) are nifU. Residues cysteine 227 and cysteine 230 each coordinate [4Fe-4S] cluster. Over residues 279-288 (QKESVNQPNA) the composition is skewed to polar residues. Residues 279–298 (QKESVNQPNAPVNIGGGTPN) are disordered.

This sequence belongs to the NifU family.

The protein resides in the mitochondrion. Functionally, molecular scaffold for [Fe-S] cluster assembly of mitochondrial iron-sulfur proteins. The chain is NFU1 iron-sulfur cluster scaffold homolog, mitochondrial from Drosophila virilis (Fruit fly).